The sequence spans 110 residues: Small heat shock protein hspG11 (110 aa).

The sHSP domain occupies K30–R110. The segment at K78–R110 is disordered. Positions N85–N96 are enriched in low complexity. The span at K101–R110 shows a compositional bias: polar residues.

The protein belongs to the small heat shock protein (HSP20) family.

The sequence is that of Small heat shock protein hspG11 (hspG11) from Dictyostelium discoideum (Social amoeba).